Consider the following 292-residue polypeptide: Lipoyl synthase (292 aa).

[4Fe-4S] cluster is bound by residues C38, C43, C49, C64, C68, C71, and S277. The Radical SAM core domain occupies 50 to 266 (WSKGTATFML…KNRAESLGFR (217 aa)).

It belongs to the radical SAM superfamily. Lipoyl synthase family. [4Fe-4S] cluster serves as cofactor.

The protein localises to the cytoplasm. The enzyme catalyses [[Fe-S] cluster scaffold protein carrying a second [4Fe-4S](2+) cluster] + N(6)-octanoyl-L-lysyl-[protein] + 2 oxidized [2Fe-2S]-[ferredoxin] + 2 S-adenosyl-L-methionine + 4 H(+) = [[Fe-S] cluster scaffold protein] + N(6)-[(R)-dihydrolipoyl]-L-lysyl-[protein] + 4 Fe(3+) + 2 hydrogen sulfide + 2 5'-deoxyadenosine + 2 L-methionine + 2 reduced [2Fe-2S]-[ferredoxin]. It participates in protein modification; protein lipoylation via endogenous pathway; protein N(6)-(lipoyl)lysine from octanoyl-[acyl-carrier-protein]: step 2/2. Its function is as follows. Catalyzes the radical-mediated insertion of two sulfur atoms into the C-6 and C-8 positions of the octanoyl moiety bound to the lipoyl domains of lipoate-dependent enzymes, thereby converting the octanoylated domains into lipoylated derivatives. The polypeptide is Lipoyl synthase (Chlorobium limicola (strain DSM 245 / NBRC 103803 / 6330)).